We begin with the raw amino-acid sequence, 356 residues long: Peptide chain release factor 1 (356 aa).

Gln-233 is modified (N5-methylglutamine).

Belongs to the prokaryotic/mitochondrial release factor family. Methylated by PrmC. Methylation increases the termination efficiency of RF1.

The protein localises to the cytoplasm. Its function is as follows. Peptide chain release factor 1 directs the termination of translation in response to the peptide chain termination codons UAG and UAA. The polypeptide is Peptide chain release factor 1 (Endomicrobium trichonymphae).